A 103-amino-acid polypeptide reads, in one-letter code: Large ribosomal subunit protein bL21 (103 aa).

It belongs to the bacterial ribosomal protein bL21 family. In terms of assembly, part of the 50S ribosomal subunit. Contacts protein L20.

Its function is as follows. This protein binds to 23S rRNA in the presence of protein L20. The protein is Large ribosomal subunit protein bL21 of Pseudomonas syringae pv. syringae (strain B728a).